Reading from the N-terminus, the 866-residue chain is Sphingomyelin phosphodiesterase 4 (866 aa).

Phosphoserine occurs at positions 169 and 285. Threonine 708 carries the phosphothreonine modification. The residue at position 792 (serine 792) is a Phosphoserine. Residues 822–842 (LLLAFFVASLFCVGPLPCTLL) traverse the membrane as a helical segment.

Mg(2+) serves as cofactor. In terms of tissue distribution, widely expressed, with highest levels in heart and skeletal muscle. As to expression, expressed in skeletal muscle (at protein level). Expressed in skeletal muscle but a lower levels than isoform 1 (at protein level).

It is found in the endoplasmic reticulum membrane. Its subcellular location is the golgi apparatus membrane. It localises to the nucleus envelope. The protein resides in the cell membrane. The protein localises to the sarcolemma. The enzyme catalyses a sphingomyelin + H2O = phosphocholine + an N-acylsphing-4-enine + H(+). With respect to regulation, activated by phosphatidylserine and tumor necrosis factor (TNF). Inhibited by scyphostatin. Its function is as follows. Catalyzes the hydrolysis of membrane sphingomyelin to form phosphorylcholine and ceramide. It has a relevant role in the homeostasis of membrane sphingolipids, thereby influencing membrane integrity, and endoplasmic reticulum organization and function. May sensitize cells to DNA damage-induced apoptosis. In skeletal muscle, mediates TNF-stimulated oxidant production. The sequence is that of Sphingomyelin phosphodiesterase 4 from Homo sapiens (Human).